A 485-amino-acid chain; its full sequence is N-succinylglutamate 5-semialdehyde dehydrogenase (485 aa).

Glycine 220–glycine 225 serves as a coordination point for NAD(+). Active-site residues include glutamate 243 and cysteine 278.

This sequence belongs to the aldehyde dehydrogenase family. AstD subfamily.

It catalyses the reaction N-succinyl-L-glutamate 5-semialdehyde + NAD(+) + H2O = N-succinyl-L-glutamate + NADH + 2 H(+). The protein operates within amino-acid degradation; L-arginine degradation via AST pathway; L-glutamate and succinate from L-arginine: step 4/5. Catalyzes the NAD-dependent reduction of succinylglutamate semialdehyde into succinylglutamate. This chain is N-succinylglutamate 5-semialdehyde dehydrogenase, found in Aliivibrio fischeri (strain ATCC 700601 / ES114) (Vibrio fischeri).